Here is a 247-residue protein sequence, read N- to C-terminus: Adenosylcobinamide-GDP ribazoletransferase (247 aa).

5 helical membrane-spanning segments follow: residues 34-54 (IITFPLIGLLLGAISGLVFMA), 59-79 (FGVPLAALFSVLVLALMTGGF), 113-133 (GGLALIFVVLAKILVLSELAL), 138-158 (ILASLAAACAVSRGTAALLMY), and 194-214 (VLLPGMHGVAAMVVTMVAIFI).

This sequence belongs to the CobS family. The cofactor is Mg(2+).

It localises to the cell inner membrane. The catalysed reaction is alpha-ribazole + adenosylcob(III)inamide-GDP = adenosylcob(III)alamin + GMP + H(+). It carries out the reaction alpha-ribazole 5'-phosphate + adenosylcob(III)inamide-GDP = adenosylcob(III)alamin 5'-phosphate + GMP + H(+). The protein operates within cofactor biosynthesis; adenosylcobalamin biosynthesis; adenosylcobalamin from cob(II)yrinate a,c-diamide: step 7/7. Joins adenosylcobinamide-GDP and alpha-ribazole to generate adenosylcobalamin (Ado-cobalamin). Also synthesizes adenosylcobalamin 5'-phosphate from adenosylcobinamide-GDP and alpha-ribazole 5'-phosphate. This chain is Adenosylcobinamide-GDP ribazoletransferase, found in Escherichia coli O17:K52:H18 (strain UMN026 / ExPEC).